We begin with the raw amino-acid sequence, 754 residues long: 1,4-alpha-glucan branching enzyme GlgB (754 aa).

The active-site Nucleophile is the aspartate 431. Catalysis depends on glutamate 484, which acts as the Proton donor.

The protein belongs to the glycosyl hydrolase 13 family. GlgB subfamily. Monomer.

The catalysed reaction is Transfers a segment of a (1-&gt;4)-alpha-D-glucan chain to a primary hydroxy group in a similar glucan chain.. Its pathway is glycan biosynthesis; glycogen biosynthesis. Catalyzes the formation of the alpha-1,6-glucosidic linkages in glycogen by scission of a 1,4-alpha-linked oligosaccharide from growing alpha-1,4-glucan chains and the subsequent attachment of the oligosaccharide to the alpha-1,6 position. This Prochlorococcus marinus (strain AS9601) protein is 1,4-alpha-glucan branching enzyme GlgB.